The sequence spans 316 residues: Phosphate acyltransferase (316 aa).

It belongs to the PlsX family. In terms of assembly, homodimer. Probably interacts with PlsY.

The protein resides in the cytoplasm. It carries out the reaction a fatty acyl-[ACP] + phosphate = an acyl phosphate + holo-[ACP]. It functions in the pathway lipid metabolism; phospholipid metabolism. Functionally, catalyzes the reversible formation of acyl-phosphate (acyl-PO(4)) from acyl-[acyl-carrier-protein] (acyl-ACP). This enzyme utilizes acyl-ACP as fatty acyl donor, but not acyl-CoA. The protein is Phosphate acyltransferase of Chlamydia felis (strain Fe/C-56) (Chlamydophila felis).